A 115-amino-acid chain; its full sequence is Small polypeptide DEVIL 13 (115 aa).

Positions M1–T12 are enriched in basic and acidic residues. The segment at M1–A89 is disordered. Residues T13–S65 show a composition bias toward low complexity. Residues S44–S63 traverse the membrane as a helical segment. The segment at S80–K111 is required for DVL/RTFL small polypeptide activity.

This sequence belongs to the DVL/RTFL small polypeptides family.

Its subcellular location is the cell membrane. Its function is as follows. Small polypeptide acting as a regulatory molecule which coordinates cellular responses required for differentiation, growth and development, probably by restricting polar cell proliferation in lateral organs and coordinating socket cell recruitment and differentiation at trichome sites. This is Small polypeptide DEVIL 13 from Arabidopsis thaliana (Mouse-ear cress).